Consider the following 374-residue polypeptide: MKADFYETLCVSRNADEKELKSAFRKLAMQYHPDRNPGDMEAEKKFKEINEAYETLRDPQKRAAYDRFGHAAFEQGMGARGGFNGGGFADIFEDIFGDIMGGARQRRSGGRERGADLRYNMEITLEESFTGKTAQIRVPTAVTCDECAGSGARPGSSPVQCPMCHGAGRVRASTGGFFSIERTCPQCQGRGQIIDDPCRKCSGQGRLTEERSLSVNIPAGIEDGTRIRLAGEGEAGLRGGPPGDLYIFLSIKPHEFFQRDGADLYCKVPISMTTAALGGSFEVTTLDGTQTRVKVPEGTQSGRQFRLRGKGMPVLRQPQVGDLYIQVAVETPQNLTRRQRELLEEFEKISSGENSPQSTGFFARMKDFFETFGE.

Residues 4 to 69 (DFYETLCVSR…QKRAAYDRFG (66 aa)) enclose the J domain. The CR-type zinc finger occupies 131 to 210 (GKTAQIRVPT…CSGQGRLTEE (80 aa)). Residues cysteine 144, cysteine 147, cysteine 161, cysteine 164, cysteine 184, cysteine 187, cysteine 198, and cysteine 201 each coordinate Zn(2+). CXXCXGXG motif repeat units lie at residues 144-151 (CDECAGSG), 161-168 (CPMCHGAG), 184-191 (CPQCQGRG), and 198-205 (CRKCSGQG).

It belongs to the DnaJ family. In terms of assembly, homodimer. Zn(2+) serves as cofactor.

Its subcellular location is the cytoplasm. Functionally, participates actively in the response to hyperosmotic and heat shock by preventing the aggregation of stress-denatured proteins and by disaggregating proteins, also in an autonomous, DnaK-independent fashion. Unfolded proteins bind initially to DnaJ; upon interaction with the DnaJ-bound protein, DnaK hydrolyzes its bound ATP, resulting in the formation of a stable complex. GrpE releases ADP from DnaK; ATP binding to DnaK triggers the release of the substrate protein, thus completing the reaction cycle. Several rounds of ATP-dependent interactions between DnaJ, DnaK and GrpE are required for fully efficient folding. Also involved, together with DnaK and GrpE, in the DNA replication of plasmids through activation of initiation proteins. The polypeptide is Chaperone protein DnaJ (Chelativorans sp. (strain BNC1)).